Consider the following 121-residue polypeptide: Phosphoribosyl-AMP cyclohydrolase (121 aa).

A Mg(2+)-binding site is contributed by Asp-76. Cys-77 provides a ligand contact to Zn(2+). Residues Asp-78 and Asp-80 each coordinate Mg(2+). Positions 93 and 100 each coordinate Zn(2+).

It belongs to the PRA-CH family. In terms of assembly, homodimer. The cofactor is Mg(2+). Zn(2+) is required as a cofactor.

It is found in the cytoplasm. The enzyme catalyses 1-(5-phospho-beta-D-ribosyl)-5'-AMP + H2O = 1-(5-phospho-beta-D-ribosyl)-5-[(5-phospho-beta-D-ribosylamino)methylideneamino]imidazole-4-carboxamide. Its pathway is amino-acid biosynthesis; L-histidine biosynthesis; L-histidine from 5-phospho-alpha-D-ribose 1-diphosphate: step 3/9. Functionally, catalyzes the hydrolysis of the adenine ring of phosphoribosyl-AMP. The sequence is that of Phosphoribosyl-AMP cyclohydrolase from Methanococcoides burtonii (strain DSM 6242 / NBRC 107633 / OCM 468 / ACE-M).